Reading from the N-terminus, the 476-residue chain is Nyctalopin (476 aa).

Positions Met1–Ala18 are cleaved as a signal peptide. An LRRNT domain is found at Thr19–Cys57. LRR repeat units follow at residues Glu58–Thr79, Ser82–Gly103, Arg106–Ala128, Arg131–Pro154, Ala155–Ala177, Asn178–Gly199, Arg202–Asp223, Ala226–Gly247, Arg250–Asp271, Glu274–Asn295, and Gly298–Pro319. Asn92 carries an N-linked (GlcNAc...) asparagine glycan. Asn178 carries N-linked (GlcNAc...) asparagine glycosylation. N-linked (GlcNAc...) asparagine glycosylation occurs at Asn295. Positions Asn331–Asp383 constitute an LRRCT domain. Asn388, Asn427, Asn434, and Asn438 each carry an N-linked (GlcNAc...) asparagine glycan.

This sequence belongs to the small leucine-rich proteoglycan (SLRP) family. SLRP class IV subfamily. As to expression, expressed abundantly in retina with lower levels in brain, lung, spleen and testis. Not detected in kidney, heart or liver. In the retina, highest expression found in the inner nuclear layer and ganglion cell layer.

It is found in the secreted. Its subcellular location is the extracellular space. It localises to the extracellular matrix. This Mus musculus (Mouse) protein is Nyctalopin (Nyx).